The sequence spans 670 residues: Amyloid beta A4 precursor protein-binding family B member 1-interacting protein (670 aa).

The residue at position 55 (serine 55) is a Phosphoserine. The 88-residue stretch at 179-266 (KKLVVKVHMD…KVLFLEKEER (88 aa)) folds into the Ras-associating domain. A PH domain is found at 313 to 422 (VPELEGALYL…WVMGIRIAKY (110 aa)). The interval 449–653 (VGTPMPAQPS…PGAPGNSEQD (205 aa)) is disordered. A compositionally biased stretch (polar residues) spans 456 to 475 (QPSTVSSGLKTGTSQPNGQM). The residue at position 532 (serine 532) is a Phosphoserine. Threonine 534 bears the Phosphothreonine mark. Serine 537 is modified (phosphoserine). Pro residues-rich tracts occupy residues 553–567 (PHPP…PPPP), 576–599 (LPPP…PPPA), 606–615 (LPPPPPPPPC), and 625–634 (PLPPKKPLVP).

This sequence belongs to the MRL family. As to quaternary structure, interacts, through the N-terminal Pro-rich region, with the WW domain of APBB1. Interacts with RAP1A, PFN1, VASP and ENAH. Ubiquitously expressed with high expression in the hematopoietic system.

The protein localises to the cell membrane. It localises to the cell projection. Its subcellular location is the lamellipodium. The protein resides in the cell junction. It is found in the focal adhesion. The protein localises to the cytoplasm. It localises to the cytoskeleton. In terms of biological role, appears to function in the signal transduction from Ras activation to actin cytoskeletal remodeling. Suppresses insulin-induced promoter activities through AP1 and SRE. Mediates Rap1-induced adhesion. This Mus musculus (Mouse) protein is Amyloid beta A4 precursor protein-binding family B member 1-interacting protein (Apbb1ip).